Reading from the N-terminus, the 1528-residue chain is Cell surface antigen I/II (1528 aa).

Residues Met1 to Ala50 form the signal peptide. A disordered region spans residues Ala50–Gln156. A compositionally biased stretch (low complexity) spans Glu51–Thr68. Polar residues-rich tracts occupy residues Asn83–Gln97 and Thr124–Lys133. Over residues Ala142–Ser154 the composition is skewed to basic and acidic residues. Ag I/II A repeat units follow at residues Gln161 to Asn235, Ser236 to Asn315, Ala316 to Asn396, and Ala397 to Leu478. 2 disordered regions span residues Val840 to Val951 and Ser1459 to Thr1480. Residues Thr855–Pro879 show a composition bias toward basic and acidic residues. The segment covering Ser1459–Glu1468 has biased composition (polar residues). The short motif at Leu1503–Gly1507 is the LPXTG sorting signal element. Thr1506 is subject to Pentaglycyl murein peptidoglycan amidated threonine. Residues Gly1507–Cys1528 constitute a propeptide, removed by sortase.

It belongs to the antigen I/II family.

Its subcellular location is the secreted. It is found in the cell wall. In Streptococcus downei (Streptococcus sobrinus), this protein is Cell surface antigen I/II.